A 203-amino-acid chain; its full sequence is Glycerol-3-phosphate acyltransferase (203 aa).

5 consecutive transmembrane segments (helical) span residues 13 to 33 (TLAC…LILT), 66 to 86 (TLLL…LWGV), 88 to 108 (AGMA…WLSF), 118 to 138 (IGVL…AWLA), and 156 to 176 (IIPV…FAVM).

It belongs to the PlsY family. As to quaternary structure, probably interacts with PlsX.

It localises to the cell inner membrane. The catalysed reaction is an acyl phosphate + sn-glycerol 3-phosphate = a 1-acyl-sn-glycero-3-phosphate + phosphate. It functions in the pathway lipid metabolism; phospholipid metabolism. In terms of biological role, catalyzes the transfer of an acyl group from acyl-phosphate (acyl-PO(4)) to glycerol-3-phosphate (G3P) to form lysophosphatidic acid (LPA). This enzyme utilizes acyl-phosphate as fatty acyl donor, but not acyl-CoA or acyl-ACP. This chain is Glycerol-3-phosphate acyltransferase, found in Sinorhizobium medicae (strain WSM419) (Ensifer medicae).